The chain runs to 1670 residues: Protein TASOR (1670 aa).

The interval 1–110 (MATAVETEAC…QIPRKSREKK (110 aa)) is disordered. Alanine 2 is modified (N-acetylalanine). Residues 67 to 78 (QSLSHEQPQDSS) are compositionally biased toward polar residues. Phosphoserine is present on serine 344. A Glycyl lysine isopeptide (Lys-Gly) (interchain with G-Cter in SUMO2) cross-link involves residue lysine 586. Phosphoserine occurs at positions 633, 636, 673, and 800. Residues lysine 823 and lysine 832 each participate in a glycyl lysine isopeptide (Lys-Gly) (interchain with G-Cter in SUMO2) cross-link. Serine 843 carries the post-translational modification Phosphoserine. Residue lysine 872 forms a Glycyl lysine isopeptide (Lys-Gly) (interchain with G-Cter in SUMO2) linkage. The tract at residues 921 to 947 (TGGNARSPEDQLGKHGEKQTPGMKSPE) is disordered. Serine 927, serine 971, and serine 979 each carry phosphoserine. Residues 927 to 938 (SPEDQLGKHGEK) are compositionally biased toward basic and acidic residues. A phosphothreonine mark is found at threonine 982 and threonine 1049. Serine 1103 bears the Phosphoserine mark. Residues 1532-1545 (ETKGSRGTDQKKNT) show a composition bias toward basic and acidic residues. Disordered stretches follow at residues 1532–1558 (ETKG…VQNS) and 1638–1670 (FLSA…SQEK). 2 stretches are compositionally biased toward polar residues: residues 1546–1558 (QIEL…VQNS) and 1659–1670 (KSDSSRPYSQEK). Residue serine 1552 is modified to Phosphoserine.

Belongs to the TASOR family. In terms of assembly, component of the HUSH complex; at least composed of TASOR, PPHLN1 and MPHOSPH8. Interacts with MORC2; the interaction associateS MORC2 with the HUSH complex which recruits MORC2 to heterochromatic loci. Interacts with ZNF638; leading to recruitment of the HUSH complex to unintegrated retroviral DNA. Interacts with INPP5A, EML1, SV1L, GPSM2, ITGB3BP, CNTN1, ETFA, PSMD8, S100A10, MPHOSPH8, TMEM100, ALB, PARPBP, HCFC2, NCBP1 and SETDB1.

The protein localises to the nucleus. It is found in the chromosome. Component of the HUSH complex, a multiprotein complex that mediates epigenetic repression. The HUSH complex is recruited to genomic loci rich in H3K9me3 and is required to maintain transcriptional silencing by promoting recruitment of SETDB1, a histone methyltransferase that mediates further deposition of H3K9me3, as well as MORC2. Also represses L1 retrotransposons in collaboration with MORC2 and, probably, SETDB1, the silencing is dependent of repressive epigenetic modifications, such as H3K9me3 mark. Silencing events often occur within introns of transcriptionally active genes, and lead to the down-regulation of host gene expression. The HUSH complex is also involved in the silencing of unintegrated retroviral DNA by being recruited by ZNF638: some part of the retroviral DNA formed immediately after infection remains unintegrated in the host genome and is transcriptionally repressed. Plays a crucial role in early embryonic development. Involved in the organization of spindle poles and spindle apparatus assembly during zygotic division. Plays an important role in maintaining epiblast fitness or potency. This is Protein TASOR from Homo sapiens (Human).